The primary structure comprises 313 residues: Biotin synthase (313 aa).

Residues 28–258 (NFGNDIELCS…LFPQARLRLS (231 aa)) form the Radical SAM core domain. [4Fe-4S] cluster-binding residues include Cys-46, Cys-50, and Cys-53. Positions 90, 121, 181, and 256 each coordinate [2Fe-2S] cluster.

It belongs to the radical SAM superfamily. Biotin synthase family. In terms of assembly, homodimer. The cofactor is [4Fe-4S] cluster. [2Fe-2S] cluster serves as cofactor.

It catalyses the reaction (4R,5S)-dethiobiotin + (sulfur carrier)-SH + 2 reduced [2Fe-2S]-[ferredoxin] + 2 S-adenosyl-L-methionine = (sulfur carrier)-H + biotin + 2 5'-deoxyadenosine + 2 L-methionine + 2 oxidized [2Fe-2S]-[ferredoxin]. The protein operates within cofactor biosynthesis; biotin biosynthesis; biotin from 7,8-diaminononanoate: step 2/2. Functionally, catalyzes the conversion of dethiobiotin (DTB) to biotin by the insertion of a sulfur atom into dethiobiotin via a radical-based mechanism. The protein is Biotin synthase of Francisella tularensis subsp. tularensis (strain WY96-3418).